The chain runs to 505 residues: Maturase K (505 aa).

Belongs to the intron maturase 2 family. MatK subfamily.

The protein resides in the plastid. It localises to the chloroplast. Functionally, usually encoded in the trnK tRNA gene intron. Probably assists in splicing its own and other chloroplast group II introns. The polypeptide is Maturase K (Calycanthus occidentalis (Spice bush)).